Here is a 192-residue protein sequence, read N- to C-terminus: MSKEEFPHEKDLKDEVTPDKAPKKDPKAASKEEVKEDPAKDYEKEIAELSAKNKDLEDKYLRSEAEIQNMQARYAKERAQLIKYESQSLAKEVLPAMDNLERALAVKADDEAAKQLQKGVQMTLDSLVKSMKDQGITEIKAEGETFDPALHQAVQTVAAENDDQKDHVVKVLQKGYQYKDRTLRPAMVVVAQ.

Residues 1 to 43 (MSKEEFPHEKDLKDEVTPDKAPKKDPKAASKEEVKEDPAKDYE) are disordered.

It belongs to the GrpE family. As to quaternary structure, homodimer.

The protein localises to the cytoplasm. Participates actively in the response to hyperosmotic and heat shock by preventing the aggregation of stress-denatured proteins, in association with DnaK and GrpE. It is the nucleotide exchange factor for DnaK and may function as a thermosensor. Unfolded proteins bind initially to DnaJ; upon interaction with the DnaJ-bound protein, DnaK hydrolyzes its bound ATP, resulting in the formation of a stable complex. GrpE releases ADP from DnaK; ATP binding to DnaK triggers the release of the substrate protein, thus completing the reaction cycle. Several rounds of ATP-dependent interactions between DnaJ, DnaK and GrpE are required for fully efficient folding. The chain is Protein GrpE from Lactobacillus gasseri (strain ATCC 33323 / DSM 20243 / BCRC 14619 / CIP 102991 / JCM 1131 / KCTC 3163 / NCIMB 11718 / NCTC 13722 / AM63).